The sequence spans 2559 residues: Nonribosomal peptide synthetase asqK (2559 aa).

An adenylation 1 region spans residues 90–474 (YRPSHTAIHA…SRKDSQVKIR (385 aa)). The Carrier 1 domain maps to 593–669 (TNIEQLVHEL…SLVHYPAGLE (77 aa)). Residue Ser627 is modified to O-(pantetheine 4'-phosphoryl)serine. The condensation 1 stretch occupies residues 695–989 (TVEQSFSQAR…GNVQCIRTKV (295 aa)). An adenylation 2 region spans residues 1155–1562 (FDEQVRAQTD…GRMDQQVKVR (408 aa)). A methyltransferase region spans residues 1681–1776 (LEIGTGSGMI…NTIKDLVRQG (96 aa)). Residues 2090–2164 (AFTSEIERAV…GLAQHLQGLG (75 aa)) form the Carrier 2 domain. O-(pantetheine 4'-phosphoryl)serine is present on Ser2124. A condensation 2 region spans residues 2261-2409 (FDGVSLSAIL…VNRCLLRVKV (149 aa)).

Belongs to the NRP synthetase family.

It catalyses the reaction O-methyl-L-tyrosine + anthranilate + S-adenosyl-L-methionine + 2 ATP = (-)-4'-methoxycyclopeptine + 2 AMP + S-adenosyl-L-homocysteine + 2 diphosphate + 2 H(+). The catalysed reaction is anthranilate + L-phenylalanine + S-adenosyl-L-methionine + 2 ATP = cyclopeptine + 2 AMP + S-adenosyl-L-homocysteine + 2 diphosphate + 2 H(+). It functions in the pathway secondary metabolite biosynthesis. It participates in alkaloid biosynthesis. The protein operates within mycotoxin biosynthesis. Functionally, nonribosomal peptide synthetase; part of the gene cluster that mediates the biosynthesis of the aspoquinolone mycotoxins. The first stage is catalyzed by the nonribosomal peptide synthetase asqK that condenses anthranilic acid and O-methyl-L-tyrosine to produce 4'-methoxycyclopeptin. AsqK is also able to use anthranilic acid and L-phenylalanine as substrates to produce cyclopeptin, but at a tenfold lower rate. Within the pathway, 4'-methoxycyclopeptin is then converted to 4'-methoxydehydrocyclopeptin by the ketoglutarate-dependent dioxygenase asqJ. AsqJ also converts its first product 4'-methoxydehydrocyclopeptin to 4'-methoxycyclopenin. The following conversion of 4'-methoxycyclopenin into 4'-methoxyviridicatin is catalyzed by the cyclopenase asqI. 4'-methoxyviridicatin is the precursor of quinolone natural products, and is further converted to quinolinone B. The prenyltransferase asqH1 then catalyzes the canonical Friedel-Crafts alkylation of quinolinone B with dimethylallyl cation to yield dimethylallyl quinolone, which is subjected to FAD-dependent dehydrogenation by the FAD-linked oxidoreductase asqF to yield conjugated aryl diene. The delta(3') double bond then serves as the site of the second alkylation with DMAPP catalyzed by the prenyltransferase asqH2 to yield a carbenium ion intermediate, which can be attacked by H(2)O to yield a styrenyl quinolone containing a C3'-hydroxyprenyl chain. The FAD-dependent monooxygenase asqG performs epoxidation of the terminal C7'-C8' olefin. Finally, after dehydratation of the epoxide at C3 by asqC, the quinolone epoxide rearrangement protein asqO catalyzes an enzymatic 3-exo-tet cyclization to yield the cyclopropyl-THF ring system in aspoquinolone. This is Nonribosomal peptide synthetase asqK from Emericella nidulans (strain FGSC A4 / ATCC 38163 / CBS 112.46 / NRRL 194 / M139) (Aspergillus nidulans).